A 353-amino-acid polypeptide reads, in one-letter code: MDLINSVLNLFVPPASLITLAFSWPALCFPHACEWLYNTVYGDNMDGKVVIITGASSGIGEQIAYEYALRRACLVLVARREHRLRGIAENARRMGARHVMIVAADVVKEDECRRFVNETINFYGRVDHLVNTVSLGHTFYFEEVTDTSVFPVLLDINFWGNIYPTLVALPYLHRTNGRVIINASVESWLPLPRMSLYAAAKAALVNFYETLRFELRDEVGVTIATHGWIGSEMTSGKFMLEEGAEMQWKEEREMNVIGGPVEEFARLMVAGACRGDAYVKYPSWYDVFLLYRVFAPNVLNWAFRLLIAPQGTKRTSSYVGTGRSLEGRPMLEAPSPRTALLAPYSFSGGGQLS.

Residues 10-30 form a helical; Signal-anchor for type II membrane protein membrane-spanning segment; it reads LFVPPASLITLAFSWPALCFP. The short motif at 13–26 is the Proline-knob element; the sequence is PPASLITLAFSWPA. NADP(+)-binding positions include 54 to 80 and Asp105; that span reads GASS…VARR. A substrate-binding site is contributed by Ser184. The Proton acceptor role is filled by Tyr197. NADP(+)-binding positions include 197–201 and Lys201; that span reads YAAAK.

The protein belongs to the short-chain dehydrogenases/reductases (SDR) family. In terms of tissue distribution, expressed in seeds (at protein level).

It localises to the lipid droplet. Its subcellular location is the membrane. The enzyme catalyses an 11beta-hydroxysteroid + NADP(+) = an 11-oxosteroid + NADPH + H(+). Functionally, has dehydrogenase activity against 11 beta-hydroxysteroid and 17 beta-hydroxysteroid. May be involved in signal transduction regulated by various sterols. This is 11-beta-hydroxysteroid dehydrogenase B from Arachis hypogaea (Peanut).